The primary structure comprises 307 residues: Ribonuclease Z (307 aa).

Residues His64, His66, Asp68, His69, His141, Asp209, and His267 each coordinate Zn(2+). Asp68 serves as the catalytic Proton acceptor.

Belongs to the RNase Z family. Homodimer. Requires Zn(2+) as cofactor.

The catalysed reaction is Endonucleolytic cleavage of RNA, removing extra 3' nucleotides from tRNA precursor, generating 3' termini of tRNAs. A 3'-hydroxy group is left at the tRNA terminus and a 5'-phosphoryl group is left at the trailer molecule.. Zinc phosphodiesterase, which displays some tRNA 3'-processing endonuclease activity. Probably involved in tRNA maturation, by removing a 3'-trailer from precursor tRNA. The protein is Ribonuclease Z of Thermoplasma acidophilum (strain ATCC 25905 / DSM 1728 / JCM 9062 / NBRC 15155 / AMRC-C165).